We begin with the raw amino-acid sequence, 121 residues long: uncharacterized protein (121 aa).

The next 3 helical transmembrane spans lie at 2-22 (VFVT…IYTI), 42-62 (FICI…YILF), and 89-109 (IFFA…LSIF).

It is found in the membrane. This is an uncharacterized protein from Saccharomyces cerevisiae (strain ATCC 204508 / S288c) (Baker's yeast).